A 381-amino-acid chain; its full sequence is L-lactate dehydrogenase A-like 6B (381 aa).

NAD(+)-binding positions include 101 to 106 (DVDEGR) and Arg-148. Residues Arg-155, Asn-187, and Arg-218 each coordinate substrate. An NAD(+)-binding site is contributed by Asn-187. Catalysis depends on His-242, which acts as the Proton acceptor. Position 297 (Thr-297) interacts with substrate.

It belongs to the LDH/MDH superfamily. LDH family.

It carries out the reaction (S)-lactate + NAD(+) = pyruvate + NADH + H(+). The protein operates within fermentation; pyruvate fermentation to lactate; (S)-lactate from pyruvate: step 1/1. This is L-lactate dehydrogenase A-like 6B (LDHAL6B) from Bos taurus (Bovine).